Here is a 639-residue protein sequence, read N- to C-terminus: Sperm-associated antigen 16 protein (639 aa).

A coiled-coil region spans residues 146–218; the sequence is DVYSQVMLLE…GLKLHYASYE (73 aa). Residues 280-333 form a disordered region; the sequence is RESGDRAGHSCEKENSSEGPTQKSLREAREEVGYKSKLKNEKKDSEFPVDMQPD. Composition is skewed to basic and acidic residues over residues 281-295 and 303-325; these read ESGD…KENS and SLRE…KDSE. WD repeat units lie at residues 358 to 397, 400 to 439, 442 to 481, 484 to 523, 526 to 565, 568 to 608, and 609 to 639; these read LHEL…VLLT, GHTD…CTLT, GHNH…CRYT, GHTD…CEQS, GHMH…PIVS, VGPS…HKLV, and GHES…RLWI.

Interacts with SPAG6 and STK36. In terms of processing, phosphorylated by TSSK2. In terms of tissue distribution, expressed in testis.

Its subcellular location is the cytoplasm. It localises to the cytoskeleton. The protein localises to the cilium axoneme. The protein resides in the flagellum axoneme. It is found in the cell projection. Its subcellular location is the cilium. It localises to the flagellum. In terms of biological role, necessary for sperm flagellar function. Plays a role in motile ciliogenesis. May help to recruit STK36 to the cilium or apical surface of the cell to initiate subsequent steps of construction of the central pair apparatus of motile cilia. This Mus musculus (Mouse) protein is Sperm-associated antigen 16 protein (Spag16).